A 226-amino-acid polypeptide reads, in one-letter code: MLTWLTRDSLTFPPLEKALHDPNGLLAAGGDLTPERLVAAYRHGCFPWYQDGQPILWWSPDPRTVLFPEELHISRSLAKFIRQGHYQVSFDSDFPAVIEACAAPRDYADGTWITDSMRAAYCELHRRGFAHSVEVRREGELVGGLYGLAMGRLFFGESMFSRADNASKVGFVALVEHLKQAGFVLIDCQMPTNHLHSLGARAISRAEFADHLARHLDQPSGASWVR.

This sequence belongs to the L/F-transferase family.

The protein resides in the cytoplasm. The enzyme catalyses N-terminal L-lysyl-[protein] + L-leucyl-tRNA(Leu) = N-terminal L-leucyl-L-lysyl-[protein] + tRNA(Leu) + H(+). It catalyses the reaction N-terminal L-arginyl-[protein] + L-leucyl-tRNA(Leu) = N-terminal L-leucyl-L-arginyl-[protein] + tRNA(Leu) + H(+). It carries out the reaction L-phenylalanyl-tRNA(Phe) + an N-terminal L-alpha-aminoacyl-[protein] = an N-terminal L-phenylalanyl-L-alpha-aminoacyl-[protein] + tRNA(Phe). Functions in the N-end rule pathway of protein degradation where it conjugates Leu, Phe and, less efficiently, Met from aminoacyl-tRNAs to the N-termini of proteins containing an N-terminal arginine or lysine. In Pseudomonas entomophila (strain L48), this protein is Leucyl/phenylalanyl-tRNA--protein transferase.